The primary structure comprises 809 residues: Glutamine--tRNA ligase (809 aa).

Basic and acidic residues predominate over residues 185–198 (DLIKKKTKNNEKKK). The disordered stretch occupies residues 185-216 (DLIKKKTKNNEKKKTNSAKKSSDNSASSGPKR). Positions 258–268 (PEPNGYLHIGH) match the 'HIGH' region motif. Residues 259–261 (EPN) and 265–271 (HIGHSKA) contribute to the ATP site. Position 291 (D291) interacts with L-glutamine. Position 378 is a phosphoserine (S378). Y440 contributes to the L-glutamine binding site. Residues T459, 488 to 489 (RL), and 496 to 498 (LSK) each bind ATP. Residues 495–499 (VLSKR) carry the 'KMSKS' region motif.

The protein belongs to the class-I aminoacyl-tRNA synthetase family.

The enzyme catalyses tRNA(Gln) + L-glutamine + ATP = L-glutaminyl-tRNA(Gln) + AMP + diphosphate. The protein is Glutamine--tRNA ligase (GLN4) of Saccharomyces cerevisiae (strain ATCC 204508 / S288c) (Baker's yeast).